Here is a 60-residue protein sequence, read N- to C-terminus: Serum basic protease inhibitor (60 aa).

One can recognise a BPTI/Kunitz inhibitor domain in the interval 7 to 57; that stretch reads CLEPPYTGPCKAAMIRYFYNAKAGFCETFVYGGCRAKSNNFKSAEDCMRTC. 3 cysteine pairs are disulfide-bonded: Cys-7–Cys-57, Cys-16–Cys-40, and Cys-32–Cys-53.

The protein localises to the secreted. Functionally, this inhibitor has activity very similar to that of the basic protease inhibitor from bovine tissues. The protein is Serum basic protease inhibitor of Bos taurus (Bovine).